The sequence spans 556 residues: Formate--tetrahydrofolate ligase (556 aa).

ATP is bound at residue 65–72; the sequence is TPAGEGKS.

Belongs to the formate--tetrahydrofolate ligase family.

It catalyses the reaction (6S)-5,6,7,8-tetrahydrofolate + formate + ATP = (6R)-10-formyltetrahydrofolate + ADP + phosphate. The protein operates within one-carbon metabolism; tetrahydrofolate interconversion. This chain is Formate--tetrahydrofolate ligase, found in Streptococcus agalactiae serotype III (strain NEM316).